Consider the following 113-residue polypeptide: Hydrogenase maturation factor HypA (113 aa).

His-2 serves as a coordination point for Ni(2+). 4 residues coordinate Zn(2+): Cys-73, Cys-76, Cys-89, and Cys-92.

The protein belongs to the HypA/HybF family.

Functionally, involved in the maturation of [NiFe] hydrogenases. Required for nickel insertion into the metal center of the hydrogenase. The sequence is that of Hydrogenase maturation factor HypA from Cereibacter sphaeroides (strain KD131 / KCTC 12085) (Rhodobacter sphaeroides).